We begin with the raw amino-acid sequence, 197 residues long: Peptide deformylase (197 aa).

2 residues coordinate Fe cation: Cys106 and His148. Glu149 is a catalytic residue. His152 lines the Fe cation pocket.

The protein belongs to the polypeptide deformylase family. Fe(2+) is required as a cofactor.

It catalyses the reaction N-terminal N-formyl-L-methionyl-[peptide] + H2O = N-terminal L-methionyl-[peptide] + formate. Removes the formyl group from the N-terminal Met of newly synthesized proteins. Requires at least a dipeptide for an efficient rate of reaction. N-terminal L-methionine is a prerequisite for activity but the enzyme has broad specificity at other positions. This Mycobacterium sp. (strain JLS) protein is Peptide deformylase.